Consider the following 401-residue polypeptide: Argininosuccinate synthase (401 aa).

ATP contacts are provided by residues 7–15 (AYSGGLDTS) and Ala34. Positions 85 and 90 each coordinate L-citrulline. Residue Gly115 coordinates ATP. L-aspartate contacts are provided by Thr117, Asn121, and Asp122. Asn121 contacts L-citrulline. L-citrulline-binding residues include Arg125, Ser174, Ser183, Glu259, and Tyr271.

The protein belongs to the argininosuccinate synthase family. Type 1 subfamily. Homotetramer.

The protein resides in the cytoplasm. The enzyme catalyses L-citrulline + L-aspartate + ATP = 2-(N(omega)-L-arginino)succinate + AMP + diphosphate + H(+). It participates in amino-acid biosynthesis; L-arginine biosynthesis; L-arginine from L-ornithine and carbamoyl phosphate: step 2/3. The sequence is that of Argininosuccinate synthase from Desulfitobacterium hafniense (strain DSM 10664 / DCB-2).